We begin with the raw amino-acid sequence, 319 residues long: Vesicle-associated membrane protein-associated protein scs22 (319 aa).

An MSP domain is found at 1–121 (MALECDSTIV…SERKIRCVYS (121 aa)). Topologically, residues 1 to 298 (MALECDSTIV…GAKVVPQIHN (298 aa)) are cytoplasmic. Residues 127–150 (ANAHANAHHQPAQTTTTSIPTSAT) show a composition bias toward low complexity. The interval 127–244 (ANAHANAHHQ…TTSPNNENNA (118 aa)) is disordered. 3 stretches are compositionally biased toward polar residues: residues 151–165 (DNYTTVNGNVNQSYS), 185–201 (STATTQHTQLPKTSAVS), and 231–244 (SVPTTTSPNNENNA). T236 is modified (phosphothreonine). 2 positions are modified to phosphoserine: S237 and S281. Residues 299–319 (TVTVQTAFLLAIICFLIGLLF) form a helical; Anchor for type IV membrane protein membrane-spanning segment.

Belongs to the VAMP-associated protein (VAP) (TC 9.B.17) family. As to quaternary structure, interacts with epr1.

Its subcellular location is the endoplasmic reticulum membrane. In terms of biological role, vesicle-associated membrane protein-associated protein (VAP) implicated in maintaining the cortical endoplasmic reticulum (ER)-plasma membrane (PM) attachment. ER-PM contacts function to modulate the distribution of contractile ring components to ensure robust ring assembly. ER-PM contacts function also in controlling exocytosis and maintenance of cell polarity regulating cell shape. VAPs play an important role in regulating eisosome assembly. VAPs also contribute to ER-phagy by tethering atg8 to the ER membrane, but also by maintaining the ER-plasma membrane contact. This Schizosaccharomyces pombe (strain 972 / ATCC 24843) (Fission yeast) protein is Vesicle-associated membrane protein-associated protein scs22 (scs22).